A 228-amino-acid chain; its full sequence is Uracil-DNA glycosylase (228 aa).

The active-site Proton acceptor is the Asp-64.

It belongs to the uracil-DNA glycosylase (UDG) superfamily. UNG family.

The protein localises to the cytoplasm. It catalyses the reaction Hydrolyzes single-stranded DNA or mismatched double-stranded DNA and polynucleotides, releasing free uracil.. Its function is as follows. Excises uracil residues from the DNA which can arise as a result of misincorporation of dUMP residues by DNA polymerase or due to deamination of cytosine. The chain is Uracil-DNA glycosylase from Yersinia pseudotuberculosis serotype O:1b (strain IP 31758).